The chain runs to 415 residues: Multidrug resistance protein MdtA (415 aa).

Positions 1 to 21 (MKGSYKSRWVIVIVVVIAAIA) are cleaved as a signal peptide. Positions 31-47 (DSQSAAPGATKQAQQSP) are enriched in polar residues. Disordered stretches follow at residues 31–60 (DSQS…GPLA) and 392–415 (EAQS…GARS). A compositionally biased stretch (basic and acidic residues) spans 399–415 (SEEKATSREYAKKGARS).

It belongs to the membrane fusion protein (MFP) (TC 8.A.1) family. Part of a tripartite efflux system composed of MdtA, MdtB and MdtC.

The protein resides in the cell inner membrane. Its function is as follows. The MdtABC tripartite complex confers resistance against novobiocin and deoxycholate. The polypeptide is Multidrug resistance protein MdtA (Escherichia coli O139:H28 (strain E24377A / ETEC)).